Reading from the N-terminus, the 278-residue chain is Transmembrane protein 45B (278 aa).

Transmembrane regions (helical) follow at residues 7 to 27 (HALPGSFFLIFGLWWSVKYPL), 49 to 69 (IIEGAVKALFAVIGILAEQFV), 95 to 115 (YLFFGVSGIIDMLTYLYFNIV), 117 to 137 (LGLDRVVLAMAVFVEGFLFYF), 149 to 169 (IHSLLLFSLFGATISICLEVI), 183 to 203 (LLILQGTWFWQIGFVLFPPFG), and 215 to 235 (VMFITMCFCWHYLVALCITAI). A phosphoserine mark is found at serine 273 and serine 275.

This sequence belongs to the TMEM45 family.

It is found in the endosome membrane. It localises to the lysosome membrane. The protein localises to the golgi apparatus. The protein resides in the trans-Golgi network membrane. Plays a role in innate immunity. This Rattus norvegicus (Rat) protein is Transmembrane protein 45B (Tmem45b).